A 380-amino-acid polypeptide reads, in one-letter code: Ribosomal RNA large subunit methyltransferase G (380 aa).

It belongs to the methyltransferase superfamily. RlmG family.

It localises to the cytoplasm. It carries out the reaction guanosine(1835) in 23S rRNA + S-adenosyl-L-methionine = N(2)-methylguanosine(1835) in 23S rRNA + S-adenosyl-L-homocysteine + H(+). Functionally, specifically methylates the guanine in position 1835 (m2G1835) of 23S rRNA. The chain is Ribosomal RNA large subunit methyltransferase G from Streptomyces avermitilis (strain ATCC 31267 / DSM 46492 / JCM 5070 / NBRC 14893 / NCIMB 12804 / NRRL 8165 / MA-4680).